The primary structure comprises 450 residues: Succinate-semialdehyde dehydrogenase (450 aa).

119–120 provides a ligand contact to NADP(+); the sequence is WN. Arginine 128 lines the substrate pocket. Residues 143–146 and 197–198 contribute to the NADP(+) site; these read KPAK and GS. The active-site Proton acceptor is glutamate 219. Residue leucine 220 participates in NADP(+) binding. Residues arginine 247 and cysteine 253 each coordinate substrate. Cysteine 253 (nucleophile) is an active-site residue. Glutamate 350 contributes to the NADP(+) binding site. Position 410 (serine 410) interacts with substrate.

Belongs to the aldehyde dehydrogenase family. Homodimer.

The catalysed reaction is succinate semialdehyde + NAD(+) + H2O = succinate + NADH + 2 H(+). The enzyme catalyses succinate semialdehyde + NADP(+) + H2O = succinate + NADPH + 2 H(+). The protein operates within alkaloid degradation; nicotine degradation. Functionally, catalyzes the NAD(P)(+)-dependent oxidation of succinate semialdehyde to succinate, which may enter the citric acid cycle. Is involved in the catabolism of 4-methylaminobutanoate produced from nicotine. Acts preferentially with NADP(+) as cosubstrate but can also use NAD(+). To a lesser extent, is active also towards butyraldehyde (8.5% of the activity observed with succinate semialdehyde) and propionaldehyde (1.6% of the activity observed with succinate semialdehyde) as substrates. This is Succinate-semialdehyde dehydrogenase (sad) from Paenarthrobacter nicotinovorans (Arthrobacter nicotinovorans).